The following is a 146-amino-acid chain: uncharacterized protein (146 aa).

Positions 34-135 constitute a Glutaredoxin domain; sequence EDKIVNDVMT…PLLEKAHALF (102 aa). Cys-54 lines the [2Fe-2S] cluster pocket.

The protein belongs to the glutaredoxin family. Monothiol subfamily.

This is an uncharacterized protein from Caenorhabditis elegans.